The following is a 557-amino-acid chain: 2-succinyl-5-enolpyruvyl-6-hydroxy-3-cyclohexene-1-carboxylate synthase (557 aa).

Belongs to the TPP enzyme family. MenD subfamily. As to quaternary structure, homodimer. Requires Mg(2+) as cofactor. Mn(2+) serves as cofactor. It depends on thiamine diphosphate as a cofactor.

It catalyses the reaction isochorismate + 2-oxoglutarate + H(+) = 5-enolpyruvoyl-6-hydroxy-2-succinyl-cyclohex-3-ene-1-carboxylate + CO2. It functions in the pathway quinol/quinone metabolism; 1,4-dihydroxy-2-naphthoate biosynthesis; 1,4-dihydroxy-2-naphthoate from chorismate: step 2/7. Its pathway is quinol/quinone metabolism; menaquinone biosynthesis. Catalyzes the thiamine diphosphate-dependent decarboxylation of 2-oxoglutarate and the subsequent addition of the resulting succinic semialdehyde-thiamine pyrophosphate anion to isochorismate to yield 2-succinyl-5-enolpyruvyl-6-hydroxy-3-cyclohexene-1-carboxylate (SEPHCHC). The protein is 2-succinyl-5-enolpyruvyl-6-hydroxy-3-cyclohexene-1-carboxylate synthase of Serratia proteamaculans (strain 568).